The primary structure comprises 105 residues: Small ribosomal subunit protein bS18 (105 aa).

Residues 1–34 form a disordered region; it reads MMINKEQDLNQLETNQEQSVEQNQTDEKRKPKPN. The segment covering 9–23 has biased composition (polar residues); that stretch reads LNQLETNQEQSVEQN.

It belongs to the bacterial ribosomal protein bS18 family. Part of the 30S ribosomal subunit. Forms a tight heterodimer with protein bS6.

Binds as a heterodimer with protein bS6 to the central domain of the 16S rRNA, where it helps stabilize the platform of the 30S subunit. This chain is Small ribosomal subunit protein bS18, found in Mycoplasma genitalium (strain ATCC 33530 / DSM 19775 / NCTC 10195 / G37) (Mycoplasmoides genitalium).